A 596-amino-acid chain; its full sequence is Genetic interactor of prohibitins 3, mitochondrial (596 aa).

Residues 1–21 (MLNLCHALRGVRQFSCSVIVK) constitute a mitochondrion transit peptide. Residues 113-305 (ESTLNDILNY…LFDLPGYSTS (193 aa)) enclose the CP-type G domain.

Belongs to the TRAFAC class YlqF/YawG GTPase family. GEP3 subfamily.

The protein localises to the mitochondrion. Its function is as follows. Interacts genetically with prohibitins and thus may be involved in the mitochondrial lipid metabolism. The protein is Genetic interactor of prohibitins 3, mitochondrial (GEP3) of Saccharomyces cerevisiae (strain AWRI796) (Baker's yeast).